A 76-amino-acid polypeptide reads, in one-letter code: MSLEEKVKNIIVDKLGVEPDEVVEEASFVDDLGADSLDLVELIMSMEETFDLEISDEEAEKILKVKDVIEYIKAHT.

Positions 1-76 constitute a Carrier domain; that stretch reads MSLEEKVKNI…DVIEYIKAHT (76 aa). An O-(pantetheine 4'-phosphoryl)serine modification is found at serine 36.

The protein belongs to the acyl carrier protein (ACP) family. In terms of processing, 4'-phosphopantetheine is transferred from CoA to a specific serine of apo-ACP by AcpS. This modification is essential for activity because fatty acids are bound in thioester linkage to the sulfhydryl of the prosthetic group.

Its subcellular location is the cytoplasm. Its pathway is lipid metabolism; fatty acid biosynthesis. Carrier of the growing fatty acid chain in fatty acid biosynthesis. The sequence is that of Acyl carrier protein from Desulfatibacillum aliphaticivorans.